An 813-amino-acid polypeptide reads, in one-letter code: Microtubule-associated protein 6 (813 aa).

Residues C5, C10, and C11 are each lipidated (S-palmitoyl cysteine). 3 disordered regions span residues 36–283, 314–651, and 756–813; these read ATEH…AAAD, VKPI…KDES, and PLKD…ESSP. A compositionally biased stretch (pro residues) spans 41–50; the sequence is GAPPQPPPPQ. Over residues 51–62 the composition is skewed to low complexity; sequence QQAQPALAPPSA. Residues 100 to 112 show a composition bias toward gly residues; it reads GRSGPGPGLGSGS. Residue S102 is modified to Phosphoserine. Residues 118-141 are mn 1; sequence DSVMRQDYRAWKVQRPEPSCRPRS. Residues 121-141 show a composition bias toward basic and acidic residues; that stretch reads MRQDYRAWKVQRPEPSCRPRS. The calmodulin-binding stretch occupies residues 126–140; that stretch reads RAWKVQRPEPSCRPR. Phosphotyrosine is present on Y143. Positions 149–173 are enriched in basic and acidic residues; that stretch reads PFERETQYQKDFRAWPLPRRGDHPW. Residues 153 to 176 are mn 2; it reads ETQYQKDFRAWPLPRRGDHPWIPK. Residues 162–176 are calmodulin-binding; sequence AWPLPRRGDHPWIPK. The residue at position 187 (S187) is a Phosphoserine. 4 calmodulin-binding regions span residues 189–203, 306–320, 357–371, and 384–398; these read PILGAPKRRPQSQER, RAWTDIKPVKPIKAK, RRRIRSLYSEPFKEP, and PKKTSASHKPTRKAK. A mn 3 region spans residues 298-321; the sequence is SSSYRNEFRAWTDIKPVKPIKAKP. The segment covering 367–376 has biased composition (basic and acidic residues); sequence PFKEPPKVEK. Over residues 383 to 398 the composition is skewed to basic residues; that stretch reads KPKKTSASHKPTRKAK. The segment covering 420 to 439 has biased composition (basic and acidic residues); it reads KPDDKEQSKEMNNKLAEAKE. A compositionally biased stretch (polar residues) spans 443–454; that stretch reads QPVSDSSKTQGP. Residues 637–651 show a composition bias toward basic and acidic residues; that stretch reads KDQDPMVPEHPKDES. Phosphoserine is present on S812.

It belongs to the STOP family. In terms of assembly, interacts with calmodulin (via C-terminus); the interaction is dependent on Ca(2+). Interacts (via C-terminus) with TMEM106B (via N-terminus). Interacts with ZDHHC17 (via ANK repeats). Interacts with ZDHHC13 (via ANK repeats). Palmitoylated. Probably depalmitoylated by ABHD17A, ABHD17B and ABHD17C. During neuronal polarization, palmitoylation and depalmitoylation cycles regulate MAP6 shuttling between secretory vesicles and microtubules, and its polarized distribution in the axon. In terms of tissue distribution, expressed in brain (at protein level). Expressed in spinal cord. Isoform 2 expression is up-regulated in the prefrontal cortex (Brodmann's area 46) of patients with schizophrenia (postmortem brain study).

Its subcellular location is the cytoplasm. It is found in the cytoskeleton. The protein resides in the golgi apparatus. It localises to the cell projection. The protein localises to the axon. Its subcellular location is the dendrite. It is found in the cytoplasmic vesicle. The protein resides in the secretory vesicle membrane. Functionally, involved in microtubule stabilization in many cell types, including neuronal cells. Specifically has microtubule cold stabilizing activity. Involved in dendrite morphogenesis and maintenance by regulating lysosomal trafficking via its interaction with TMEM106B. Regulates KIF5A-mediated axonal cargo transport. Regulates axonal growth during neuron polarization. This chain is Microtubule-associated protein 6 (MAP6), found in Homo sapiens (Human).